A 69-amino-acid chain; its full sequence is Large ribosomal subunit protein bL31 (69 aa).

The Zn(2+) site is built by C17, C19, C37, and C40.

It belongs to the bacterial ribosomal protein bL31 family. Type A subfamily. As to quaternary structure, part of the 50S ribosomal subunit. It depends on Zn(2+) as a cofactor.

Its function is as follows. Binds the 23S rRNA. This is Large ribosomal subunit protein bL31 from Caldanaerobacter subterraneus subsp. tengcongensis (strain DSM 15242 / JCM 11007 / NBRC 100824 / MB4) (Thermoanaerobacter tengcongensis).